Consider the following 131-residue polypeptide: Acyl carrier protein 3, mitochondrial (131 aa).

Residues 1-39 (MHCIRSSILQHLRLRVSVRPTSLLQNENGFKSIGIFNFT) constitute a mitochondrion transit peptide. A Carrier domain is found at 49-124 (DQILSRVIEL…DVATYILSET (76 aa)). S84 carries the O-(pantetheine 4'-phosphoryl)serine modification.

This sequence belongs to the acyl carrier protein (ACP) family. In terms of assembly, complex I is composed of at least 49 different subunits. In terms of processing, 4'-phosphopantetheine is transferred from CoA to a specific serine of the apo-ACP-like protein.

The protein resides in the mitochondrion. It functions in the pathway lipid metabolism; fatty acid biosynthesis. In terms of biological role, carrier of the growing fatty acid chain in fatty acid biosynthesis. May be involved in the synthesis of short and medium chain fatty acids. Accessory and non-catalytic subunit of the mitochondrial membrane respiratory chain NADH dehydrogenase (Complex I), which functions in the transfer of electrons from NADH to the respiratory chain. This chain is Acyl carrier protein 3, mitochondrial (MTACP2), found in Arabidopsis thaliana (Mouse-ear cress).